The chain runs to 170 residues: MFYPVVQILIGIILVIILILGFYHLKRKPPKKKCKTDTDCKDKGHHCVRGACTDKSCLEAVKQDIKDIKLDPTIRSCDYAPGFYRFNATTADLQSPFGKTRIDLGKVWTTWSKEDEYCQSLCLQHKGSIGWEFDEMSLRGEGNCYCYTNSHPALKNSNNTTVMGIARNVL.

Met1 is a topological domain (intravirion). A helical membrane pass occupies residues 2-22 (FYPVVQILIGIILVIILILGF). Over 23–170 (YHLKRKPPKK…TVMGIARNVL (148 aa)) the chain is Virion surface.

Belongs to the asfivirus envelope protein p22 family.

It localises to the virion membrane. Its subcellular location is the host cell membrane. This African swine fever virus (isolate Tick/South Africa/Pretoriuskop Pr4/1996) (ASFV) protein is Envelope protein 168.